The following is a 255-amino-acid chain: tRNA (guanine-N(1)-)-methyltransferase (255 aa).

Residues Gly113 and 133-138 (IGDYVL) each bind S-adenosyl-L-methionine.

It belongs to the RNA methyltransferase TrmD family. Homodimer.

Its subcellular location is the cytoplasm. The enzyme catalyses guanosine(37) in tRNA + S-adenosyl-L-methionine = N(1)-methylguanosine(37) in tRNA + S-adenosyl-L-homocysteine + H(+). Its function is as follows. Specifically methylates guanosine-37 in various tRNAs. In Serratia proteamaculans (strain 568), this protein is tRNA (guanine-N(1)-)-methyltransferase.